Reading from the N-terminus, the 288-residue chain is 2-dehydro-3-deoxyphosphooctonate aldolase (288 aa).

This sequence belongs to the KdsA family.

It is found in the cytoplasm. The catalysed reaction is D-arabinose 5-phosphate + phosphoenolpyruvate + H2O = 3-deoxy-alpha-D-manno-2-octulosonate-8-phosphate + phosphate. It participates in carbohydrate biosynthesis; 3-deoxy-D-manno-octulosonate biosynthesis; 3-deoxy-D-manno-octulosonate from D-ribulose 5-phosphate: step 2/3. It functions in the pathway bacterial outer membrane biogenesis; lipopolysaccharide biosynthesis. The polypeptide is 2-dehydro-3-deoxyphosphooctonate aldolase (Syntrophobacter fumaroxidans (strain DSM 10017 / MPOB)).